Reading from the N-terminus, the 194-residue chain is Putative 3-methyladenine DNA glycosylase (194 aa).

It belongs to the DNA glycosylase MPG family.

This Synechococcus elongatus (strain ATCC 33912 / PCC 7942 / FACHB-805) (Anacystis nidulans R2) protein is Putative 3-methyladenine DNA glycosylase.